A 137-amino-acid polypeptide reads, in one-letter code: ATP synthase epsilon chain, chloroplastic (137 aa).

The protein belongs to the ATPase epsilon chain family. In terms of assembly, F-type ATPases have 2 components, CF(1) - the catalytic core - and CF(0) - the membrane proton channel. CF(1) has five subunits: alpha(3), beta(3), gamma(1), delta(1), epsilon(1). CF(0) has three main subunits: a, b and c.

It localises to the plastid. It is found in the chloroplast thylakoid membrane. Produces ATP from ADP in the presence of a proton gradient across the membrane. The polypeptide is ATP synthase epsilon chain, chloroplastic (Pisum sativum (Garden pea)).